Consider the following 1175-residue polypeptide: Chromosome partition protein Smc (1175 aa).

32 to 39 contacts ATP; sequence PNGCGKSN. Positions 170–504 form a coiled coil; it reads VSKYKERRRE…ALKALQEKVK (335 aa). The SMC hinge domain occupies 524 to 625; that stretch reads LWSRIAIEPG…YTAPTLEEAL (102 aa). Coiled coils occupy residues 684-918 and 944-1022; these read DESR…FQLK and SQSI…ELLS. The disordered stretch occupies residues 807-849; sequence RQAQEATFSRRSLEARRGELSRTIETASQQARSLADEQQRAQD. Basic and acidic residues predominate over residues 817–828; that stretch reads RSLEARRGELSR. The span at 829–838 shows a compositional bias: polar residues; sequence TIETASQQAR. Basic and acidic residues predominate over residues 840-849; it reads LADEQQRAQD.

It belongs to the SMC family. Homodimer.

The protein localises to the cytoplasm. In terms of biological role, required for chromosome condensation and partitioning. The protein is Chromosome partition protein Smc of Delftia acidovorans (strain DSM 14801 / SPH-1).